Here is a 330-residue protein sequence, read N- to C-terminus: Flotillin-like protein FloA (330 aa).

The next 2 helical transmembrane spans lie at 5 to 25 and 27 to 47; these read FLPL…FYYV and FLLW…QLFL.

It belongs to the flotillin-like FloA family. As to quaternary structure, homooligomerizes.

The protein resides in the cell membrane. It localises to the membrane raft. Its function is as follows. Found in functional membrane microdomains (FMM) that may be equivalent to eukaryotic membrane rafts. FMMs are highly dynamic and increase in number as cells age. Flotillins are thought to be important factors in membrane fluidity. This Parabacteroides distasonis (strain ATCC 8503 / DSM 20701 / CIP 104284 / JCM 5825 / NCTC 11152) protein is Flotillin-like protein FloA.